The chain runs to 210 residues: Pyridoxine/pyridoxamine 5'-phosphate oxidase (210 aa).

Substrate contacts are provided by residues 7–10 and lysine 65; that span reads REDY. FMN contacts are provided by residues 60-65, 75-76, arginine 81, lysine 82, and glutamine 104; these read RMVLLK and FT. The substrate site is built by tyrosine 122, arginine 126, and serine 130. Residues 139-140 and tryptophan 183 contribute to the FMN site; that span reads QS. Residue 189 to 191 coordinates substrate; it reads RLH. FMN is bound at residue arginine 193.

This sequence belongs to the pyridoxamine 5'-phosphate oxidase family. As to quaternary structure, homodimer. The cofactor is FMN.

It carries out the reaction pyridoxamine 5'-phosphate + O2 + H2O = pyridoxal 5'-phosphate + H2O2 + NH4(+). The catalysed reaction is pyridoxine 5'-phosphate + O2 = pyridoxal 5'-phosphate + H2O2. It functions in the pathway cofactor metabolism; pyridoxal 5'-phosphate salvage; pyridoxal 5'-phosphate from pyridoxamine 5'-phosphate: step 1/1. The protein operates within cofactor metabolism; pyridoxal 5'-phosphate salvage; pyridoxal 5'-phosphate from pyridoxine 5'-phosphate: step 1/1. Functionally, catalyzes the oxidation of either pyridoxine 5'-phosphate (PNP) or pyridoxamine 5'-phosphate (PMP) into pyridoxal 5'-phosphate (PLP). This Neisseria meningitidis serogroup A / serotype 4A (strain DSM 15465 / Z2491) protein is Pyridoxine/pyridoxamine 5'-phosphate oxidase.